A 314-amino-acid polypeptide reads, in one-letter code: tRNA pseudouridine synthase B (314 aa).

Histidine 43 provides a ligand contact to substrate. Residue aspartate 48 is the Nucleophile of the active site. Positions 76, 179, and 200 each coordinate substrate.

The protein belongs to the pseudouridine synthase TruB family. Type 1 subfamily.

The enzyme catalyses uridine(55) in tRNA = pseudouridine(55) in tRNA. Functionally, responsible for synthesis of pseudouridine from uracil-55 in the psi GC loop of transfer RNAs. This Cronobacter sakazakii (strain ATCC BAA-894) (Enterobacter sakazakii) protein is tRNA pseudouridine synthase B.